We begin with the raw amino-acid sequence, 146 residues long: Protein US8.5 (146 aa).

The disordered stretch occupies residues 63-93 (LIAIADARGDPPETLPPGAGGAAPACRRPPR). The span at 84 to 93 (AAPACRRPPR) shows a compositional bias: low complexity.

Belongs to the HHV-1 US8.5 protein family. Phosphorylated.

The protein resides in the host nucleus. It localises to the host nucleolus. This Human herpesvirus 2 (strain HG52) (HHV-2) protein is Protein US8.5.